Consider the following 192-residue polypeptide: dCTP deaminase, dUMP-forming (192 aa).

DCTP is bound by residues lysine 101–arginine 106, aspartate 119, threonine 127–glutamate 129, glutamine 148, tyrosine 162, and glutamine 174. Glutamate 129 (proton donor/acceptor) is an active-site residue. The disordered stretch occupies residues glycine 165–leucine 184. Residues tyrosine 171–histidine 183 are compositionally biased toward polar residues.

Belongs to the dCTP deaminase family. In terms of assembly, homotrimer.

It carries out the reaction dCTP + 2 H2O = dUMP + NH4(+) + diphosphate. It functions in the pathway pyrimidine metabolism; dUMP biosynthesis; dUMP from dCTP: step 1/1. Its function is as follows. Bifunctional enzyme that catalyzes both the deamination of dCTP to dUTP and the hydrolysis of dUTP to dUMP without releasing the toxic dUTP intermediate. The protein is dCTP deaminase, dUMP-forming of Kocuria rhizophila (strain ATCC 9341 / DSM 348 / NBRC 103217 / DC2201).